Reading from the N-terminus, the 271-residue chain is Regulatory protein RecX (271 aa).

Belongs to the RecX family.

It is found in the cytoplasm. Its function is as follows. Modulates RecA activity. In Geobacillus sp. (strain WCH70), this protein is Regulatory protein RecX.